The chain runs to 241 residues: ATP synthase subunit a (241 aa).

A run of 5 helical transmembrane segments spans residues 30–50 (GQIF…VLVG), 89–109 (LPFI…GALI), 128–148 (INTT…AGLS), 193–213 (LAVG…VMLL), and 214–234 (GLFT…FYIG).

This sequence belongs to the ATPase A chain family. As to quaternary structure, F-type ATPases have 2 components, CF(1) - the catalytic core - and CF(0) - the membrane proton channel. CF(1) has five subunits: alpha(3), beta(3), gamma(1), delta(1), epsilon(1). CF(0) has four main subunits: a, b, b' and c.

It localises to the cellular thylakoid membrane. Functionally, key component of the proton channel; it plays a direct role in the translocation of protons across the membrane. This is ATP synthase subunit a from Synechococcus sp. (strain CC9311).